A 439-amino-acid chain; its full sequence is Phosphoribosylamine--glycine ligase (439 aa).

Residues 109-317 (REFMERNKIP…LVEISERIID (209 aa)) form the ATP-grasp domain. 136–195 (IDEFGKPVVVKPLGLTGGKGVKVVGYQLKDNEEAKEYAEYLIRKDGKVLIEERTDGVEFT) contacts ATP. 3 residues coordinate Mg(2+): Q275, E287, and N289. The Mn(2+) site is built by Q275, E287, and N289.

The protein belongs to the GARS family. Mg(2+) serves as cofactor. It depends on Mn(2+) as a cofactor.

It carries out the reaction 5-phospho-beta-D-ribosylamine + glycine + ATP = N(1)-(5-phospho-beta-D-ribosyl)glycinamide + ADP + phosphate + H(+). Its pathway is purine metabolism; IMP biosynthesis via de novo pathway; N(1)-(5-phospho-D-ribosyl)glycinamide from 5-phospho-alpha-D-ribose 1-diphosphate: step 2/2. The protein is Phosphoribosylamine--glycine ligase of Pyrococcus furiosus (strain ATCC 43587 / DSM 3638 / JCM 8422 / Vc1).